A 371-amino-acid chain; its full sequence is Cytochrome b (371 aa).

A run of 4 helical transmembrane segments spans residues 25 to 45, 69 to 90, 105 to 125, and 170 to 190; these read FGSMLLTCLALQTSTGFFLAI, WTMQNLHAIGASLFFMCIYTHI, WLSGTILLMLLMATAFFGYVL, and FFALHFILPFLIISLSSVHII. The heme b site is built by histidine 75 and histidine 89. Heme b-binding residues include histidine 174 and histidine 188. Histidine 193 lines the a ubiquinone pocket. The next 4 membrane-spanning stretches (helical) occupy residues 218–238, 280–300, 312–332, and 339–358; these read YKDMLMTTIMITLLFIIMSFS, LGGTLALLMSIMILTTTPFTH, FTQLLFWTLIATFITITWTAT, and FILISQTASVIYFSFFIINP.

Belongs to the cytochrome b family. As to quaternary structure, the cytochrome bc1 complex contains 3 respiratory subunits (MT-CYB, CYC1 and UQCRFS1), 2 core proteins (UQCRC1 and UQCRC2) and probably 6 low-molecular weight proteins. It depends on heme b as a cofactor.

The protein resides in the mitochondrion inner membrane. Its function is as follows. Component of the ubiquinol-cytochrome c reductase complex (complex III or cytochrome b-c1 complex) that is part of the mitochondrial respiratory chain. The b-c1 complex mediates electron transfer from ubiquinol to cytochrome c. Contributes to the generation of a proton gradient across the mitochondrial membrane that is then used for ATP synthesis. The protein is Cytochrome b (MT-CYB) of Elapognathus coronatus (Western crowned snake).